Consider the following 167-residue polypeptide: Neutrophilic granule protein (167 aa).

The first 21 residues, Met-1–Ala-21, serve as a signal peptide directing secretion. Residues Glu-122–Phe-141 are disordered.

Belongs to the cathelicidin family. In terms of assembly, monomer. Homodimer; disulfide-linked. In terms of tissue distribution, expressed in myeloid bone marrow cells. Expressed in neutrophilic precursors (at protein level). Expressed in myeloid bone marrow cells.

The protein localises to the secreted. The protein resides in the cytoplasmic granule. In terms of biological role, acts as an inhibitor of cathepsin B (CTSB) activity. Plays a role as a negative regulator of tumor vascular development, cell invasion and metastasis. The protein is Neutrophilic granule protein of Mus musculus (Mouse).